Reading from the N-terminus, the 256-residue chain is MKIITCYKCVPDEQDIAVNNADGSLDFSKADAKISQYDLNAIEAACQLKQQAAEAQVTALSVGGKALTNAKGRKDVLSRGPDELIVVIDDQFEQALPQQTASVLAAAAQKAGFDLILCGDGSSDLYAQQVGLLVGEILNIPAVNGVSKIISLTADTLTVERELEDETETLSIPLPAVVAVSTDINSPQIPSMKAILGAAKKPVQVWSAADIGFNAEAAWSEQQVAAPKQRERQRIVIEGDGEEQIAAFAENLRKVI.

It belongs to the ETF beta-subunit/FixA family. As to quaternary structure, heterodimer of FixA and FixB.

Its pathway is amine and polyamine metabolism; carnitine metabolism. Its function is as follows. Required for anaerobic carnitine reduction. May bring reductant to CaiA. The chain is Protein FixA from Escherichia coli O6:H1 (strain CFT073 / ATCC 700928 / UPEC).